The sequence spans 711 residues: Quinolinate synthase, chloroplastic (711 aa).

Residues 1-41 (MDVSSLAAAAPSLVAPPLHHKPHLAFPPHHPSPARGSIGVR) constitute a chloroplast transit peptide. The tract at residues 17–63 (PLHHKPHLAFPPHHPSPARGSIGVRCAHSPSPHPLRPSAATADEEVS) is disordered. Cys-114 serves as the catalytic Cysteine persulfide intermediate. His-263 and Ser-289 together coordinate iminosuccinate. Cys-343 serves as a coordination point for [4Fe-4S] cluster. Iminosuccinate contacts are provided by residues 372 to 374 (YIN) and Ser-394. A [4Fe-4S] cluster-binding site is contributed by Cys-467. Iminosuccinate contacts are provided by residues 493-495 (HFE) and Thr-518. [4Fe-4S] cluster is bound at residue Cys-631.

It belongs to the quinolinate synthase family. Type 1 subfamily. In terms of assembly, homodimer. [4Fe-4S] cluster serves as cofactor.

It localises to the plastid. The protein resides in the chloroplast. It catalyses the reaction iminosuccinate + dihydroxyacetone phosphate = quinolinate + phosphate + 2 H2O + H(+). The protein operates within cofactor biosynthesis; NAD(+) biosynthesis; quinolinate from iminoaspartate: step 1/1. In terms of biological role, catalyzes the condensation of iminoaspartate with dihydroxyacetone phosphate to form quinolinate. The chain is Quinolinate synthase, chloroplastic from Oryza sativa subsp. japonica (Rice).